The following is a 162-amino-acid chain: Caveolin-2 (162 aa).

At Met1–Lys86 the chain is on the cytoplasmic side. Tyr19 is modified (phosphotyrosine; by SRC). Phosphoserine is present on residues Ser20 and Ser23. Tyr27 carries the post-translational modification Phosphotyrosine; by SRC. A Phosphoserine modification is found at Ser36. An intramembrane region (helical) is located at residues Phe87 to Leu107. The Cytoplasmic portion of the chain corresponds to Ser108–Asp162.

It belongs to the caveolin family. Monomer or homodimer. Interacts with CAV1; the interaction forms a stable heterooligomeric complex that is required for targeting to lipid rafts and for caveolae formation. Tyrosine phosphorylated forms do not form heterooligomers with the Tyr-19-phosphorylated form existing as a monomer or dimer, and the Tyr-27-form as a monomer only. Interacts (tyrosine phosphorylated form) with the SH2 domain-containing proteins, RASA1, NCK1 and SRC. Interacts (tyrosine phosphorylated form) with INSR, the interaction (Tyr-27-phosphorylated form) is increased on insulin stimulation. Interacts (Tyr-19 phosphorylated form) with MAPK1 (phosphorylated form); the interaction, promoted by insulin, leads to nuclear location and MAPK1 activation. Interacts with STAT3; the interaction is increased on insulin-induced tyrosine phosphorylation leading to STAT activation. Phosphorylated on serine and tyrosine residues. CAV1 promotes phosphorylation on Ser-23 which then targets the complex to the plasma membrane, lipid rafts and caveolae. Phosphorylation on Ser-36 appears to modulate mitosis in endothelial cells. Phosphorylation on both Tyr-19 and Tyr-27 is required for insulin-induced 'Ser-727' phosphorylation of STAT3 and its activation. Phosphorylation on Tyr-19 is required for insulin-induced phosphorylation of MAPK1 and DNA binding of STAT3. Tyrosine phosphorylation is induced by both EGF and insulin (By. similarity).

Its subcellular location is the nucleus. It localises to the cytoplasm. The protein resides in the golgi apparatus membrane. The protein localises to the cell membrane. It is found in the membrane. Its subcellular location is the caveola. Functionally, may act as a scaffolding protein within caveolar membranes. Interacts directly with G-protein alpha subunits and can functionally regulate their activity. Acts as an accessory protein in conjunction with CAV1 in targeting to lipid rafts and driving caveolae formation. The Ser-36 phosphorylated form has a role in modulating mitosis in endothelial cells. Positive regulator of cellular mitogenesis of the MAPK signaling pathway. Required for the insulin-stimulated nuclear translocation and activation of MAPK1 and STAT3, and the subsequent regulation of cell cycle progression. The sequence is that of Caveolin-2 (CAV2) from Plecturocebus moloch (Dusky titi monkey).